The sequence spans 552 residues: 5'-AMP-activated protein kinase catalytic subunit alpha-2 (552 aa).

Residues 16–268 (YVLGDTLGVG…IKDIREHEWF (253 aa)) form the Protein kinase domain. ATP is bound by residues 22 to 30 (LGVGTFGKV) and Lys-45. Residue Asp-139 is the Proton acceptor of the active site. The residue at position 172 (Thr-172) is a Phosphothreonine; by LKB1 and CaMKK2. A Phosphothreonine modification is found at Thr-258. The AIS stretch occupies residues 291-376 (EAVKEVCEKF…PERMPPLIAD (86 aa)). Residue Ser-377 is modified to Phosphoserine. The tract at residues 477–521 (VEQRSGSSTPQRSCSAAGLHRPRSSFDSTTAESHSLSGSLTGSLT) is disordered. The span at 480-490 (RSGSSTPQRSC) shows a compositional bias: polar residues. Residue Ser-491 is modified to Phosphoserine. Over residues 501–510 (SFDSTTAESH) the composition is skewed to polar residues. A compositionally biased stretch (low complexity) spans 511 to 521 (SLSGSLTGSLT).

It belongs to the protein kinase superfamily. CAMK Ser/Thr protein kinase family. SNF1 subfamily. AMPK is a heterotrimer of an alpha catalytic subunit (PRKAA1 or PRKAA2), a beta (PRKAB1 or PRKAB2) and a gamma non-catalytic subunits (PRKAG1, PRKAG2 or PRKAG3). Interacts with FNIP1 and FNIP2. Associates with internalized insulin receptor/INSR complexes on Golgi/endosomal membranes; PRKAA2/AMPK2 together with ATIC and HACD3/PTPLAD1 is proposed to be part of a signaling network regulating INSR autophosphorylation and endocytosis. Interacts with ARF6. The phosphorylated form at Thr-172 mediated by CamKK2 interacts with ACSS2. It depends on Mg(2+) as a cofactor. Ubiquitinated. In terms of processing, phosphorylated at Thr-172 by STK11/LKB1 in complex with STE20-related adapter-alpha (STRADA) pseudo kinase and CAB39. Also phosphorylated at Thr-172 by CAMKK2; triggered by a rise in intracellular calcium ions, without detectable changes in the AMP/ATP ratio. CAMKK1 can also phosphorylate Thr-172, but at much lower level. Dephosphorylated by protein phosphatase 2A and 2C (PP2A and PP2C). Phosphorylated by ULK1; leading to negatively regulate AMPK activity and suggesting the existence of a regulatory feedback loop between ULK1 and AMPK. Dephosphorylated by PPM1A and PPM1B at Thr-172 (mediated by STK11/LKB1).

It is found in the cytoplasm. It localises to the nucleus. The enzyme catalyses L-seryl-[protein] + ATP = O-phospho-L-seryl-[protein] + ADP + H(+). The catalysed reaction is L-threonyl-[protein] + ATP = O-phospho-L-threonyl-[protein] + ADP + H(+). It catalyses the reaction L-seryl-[acetyl-CoA carboxylase] + ATP = O-phospho-L-seryl-[acetyl-CoA carboxylase] + ADP + H(+). It carries out the reaction L-seryl-[3-hydroxy-3-methylglutaryl-coenzyme A reductase] + ATP = O-phospho-L-seryl-[3-hydroxy-3-methylglutaryl-coenzyme A reductase] + ADP + H(+). Activated by phosphorylation on Thr-172. Binding of AMP to non-catalytic gamma subunit (PRKAG1, PRKAG2 or PRKAG3) results in allosteric activation, inducing phosphorylation on Thr-172. AMP-binding to gamma subunit also sustains activity by preventing dephosphorylation of Thr-172. ADP also stimulates Thr-172 phosphorylation, without stimulating already phosphorylated AMPK. ATP promotes dephosphorylation of Thr-172, rendering the enzyme inactive. Under physiological conditions AMPK mainly exists in its inactive form in complex with ATP, which is much more abundant than AMP. AMPK is activated by antihyperglycemic drug metformin, a drug prescribed to patients with type 2 diabetes: in vivo, metformin seems to mainly inhibit liver gluconeogenesis. However, metformin can be used to activate AMPK in muscle and other cells in culture or ex vivo. Selectively inhibited by compound C (6-[4-(2-Piperidin-1-yl-ethoxy)-phenyl)]-3-pyridin-4-yl-pyyrazolo[1,5-a] pyrimidine. Activated by resveratrol, a natural polyphenol present in red wine, and S17834, a synthetic polyphenol. Salicylate/aspirin directly activates kinase activity, primarily by inhibiting Thr-172 dephosphorylation. Functionally, catalytic subunit of AMP-activated protein kinase (AMPK), an energy sensor protein kinase that plays a key role in regulating cellular energy metabolism. In response to reduction of intracellular ATP levels, AMPK activates energy-producing pathways and inhibits energy-consuming processes: inhibits protein, carbohydrate and lipid biosynthesis, as well as cell growth and proliferation. AMPK acts via direct phosphorylation of metabolic enzymes, and by longer-term effects via phosphorylation of transcription regulators. Regulates lipid synthesis by phosphorylating and inactivating lipid metabolic enzymes such as ACACA, ACACB, GYS1, HMGCR and LIPE; regulates fatty acid and cholesterol synthesis by phosphorylating acetyl-CoA carboxylase (ACACA and ACACB) and hormone-sensitive lipase (LIPE) enzymes, respectively. Promotes lipolysis of lipid droplets by mediating phosphorylation of isoform 1 of CHKA (CHKalpha2). Regulates insulin-signaling and glycolysis by phosphorylating IRS1, PFKFB2 and PFKFB3. Involved in insulin receptor/INSR internalization. AMPK stimulates glucose uptake in muscle by increasing the translocation of the glucose transporter SLC2A4/GLUT4 to the plasma membrane, possibly by mediating phosphorylation of TBC1D4/AS160. Regulates transcription and chromatin structure by phosphorylating transcription regulators involved in energy metabolism such as CRTC2/TORC2, FOXO3, histone H2B, HDAC5, MEF2C, MLXIPL/ChREBP, EP300, HNF4A, p53/TP53, SREBF1, SREBF2 and PPARGC1A. Acts as a key regulator of glucose homeostasis in liver by phosphorylating CRTC2/TORC2, leading to CRTC2/TORC2 sequestration in the cytoplasm. In response to stress, phosphorylates 'Ser-36' of histone H2B (H2BS36ph), leading to promote transcription. Acts as a key regulator of cell growth and proliferation by phosphorylating FNIP1, TSC2, RPTOR, WDR24 and ATG1/ULK1: in response to nutrient limitation, negatively regulates the mTORC1 complex by phosphorylating RPTOR component of the mTORC1 complex and by phosphorylating and activating TSC2. Also phosphorylates and inhibits GATOR2 subunit WDR24 in response to nutrient limitation, leading to suppress glucose-mediated mTORC1 activation. In response to energetic stress, phosphorylates FNIP1, inactivating the non-canonical mTORC1 signaling, thereby promoting nuclear translocation of TFEB and TFE3, and inducing transcription of lysosomal or autophagy genes. In response to nutrient limitation, promotes autophagy by phosphorylating and activating ATG1/ULK1. In that process, it also activates WDR45/WIPI4. Phosphorylates CASP6, thereby preventing its autoprocessing and subsequent activation. AMPK also acts as a regulator of circadian rhythm by mediating phosphorylation of CRY1, leading to destabilize it. May regulate the Wnt signaling pathway by phosphorylating CTNNB1, leading to stabilize it. Also acts as a regulator of cellular polarity by remodeling the actin cytoskeleton; probably by indirectly activating myosin. Also phosphorylates CFTR, EEF2K, KLC1, NOS3 and SLC12A1. Plays an important role in the differential regulation of pro-autophagy (composed of PIK3C3, BECN1, PIK3R4 and UVRAG or ATG14) and non-autophagy (composed of PIK3C3, BECN1 and PIK3R4) complexes, in response to glucose starvation. Can inhibit the non-autophagy complex by phosphorylating PIK3C3 and can activate the pro-autophagy complex by phosphorylating BECN1. Upon glucose starvation, promotes ARF6 activation in a kinase-independent manner leading to cell migration. Upon glucose deprivation mediates the phosphorylation of ACSS2 at 'Ser-659', which exposes the nuclear localization signal of ACSS2, required for its interaction with KPNA1 and nuclear translocation. Upon stress, regulates mitochondrial fragmentation through phosphorylation of MTFR1L. This chain is 5'-AMP-activated protein kinase catalytic subunit alpha-2, found in Homo sapiens (Human).